The primary structure comprises 285 residues: Cytochrome c1 (285 aa).

An N-terminal signal peptide occupies residues 1 to 22; sequence MIRKLTLTAATALALSGGAAMA. 4 residues coordinate heme c: C58, C61, H62, and M207. The chain crosses the membrane as a helical span at residues 251-269; that stretch reads AGFTAVMFLTVLSVLLYLT.

In terms of assembly, the main subunits of complex b-c1 are: cytochrome b, cytochrome c1 and the Rieske protein. Binds 1 heme c group covalently per subunit.

It is found in the cell membrane. Functionally, component of the ubiquinol-cytochrome c reductase complex (complex III or cytochrome b-c1 complex), which is a respiratory chain that generates an electrochemical potential coupled to ATP synthesis. c1 functions as an electron donor to cytochrome c. This Cereibacter sphaeroides (Rhodobacter sphaeroides) protein is Cytochrome c1 (petC).